Here is a 986-residue protein sequence, read N- to C-terminus: DNA polymerase (986 aa).

Disordered regions lie at residues Asp-804–Arg-824 and Arg-944–Asp-969. A compositionally biased stretch (acidic residues) spans Asp-948–Asn-968.

Belongs to the DNA polymerase type-B family.

It carries out the reaction DNA(n) + a 2'-deoxyribonucleoside 5'-triphosphate = DNA(n+1) + diphosphate. In terms of biological role, replicates the viral genome, host DNA polymerases cannot substitute for the viral enzyme in this process. The polypeptide is DNA polymerase (POL) (Bombyx mori (Silk moth)).